Here is a 569-residue protein sequence, read N- to C-terminus: RNA demethylase ALKBH10B (569 aa).

Residues 118–151 (QKVAAKKAEDLKQKKTEEEAEEDLKEVVATEEEE) are a coiled coil. Residues 164–190 (ENDVNGDVEDVEDDSPTSDITDSGSHQ) are disordered. Over residues 167 to 179 (VNGDVEDVEDDSP) the composition is skewed to acidic residues. Over residues 180–189 (TSDITDSGSH) the composition is skewed to polar residues. Fe cation is bound by residues His-366, Glu-368, and His-421. Arg-430 serves as a coordination point for 2-oxoglutarate. The span at 531-545 (KHVKHLPPRAQKKRL) shows a compositional bias: basic residues. Positions 531 to 569 (KHVKHLPPRAQKKRLLPLPPAASSSPAGGSTSEPVITVG) are disordered. Low complexity predominate over residues 551–560 (AASSSPAGGS).

The protein belongs to the alkB family. Requires Fe(2+) as cofactor.

It catalyses the reaction an N(6)-methyladenosine in mRNA + 2-oxoglutarate + O2 = an adenosine in mRNA + formaldehyde + succinate + CO2. Functionally, dioxygenase that demethylates RNA by oxidative demethylation: specifically demethylates N(6)-methyladenosine (m6A) RNA, the most prevalent internal modification of messenger RNA (mRNA) in higher eukaryotes. ALKBH10B-mediated mRNA m6A demethylation stabilizes the mRNA of the key flowering time regulators FT, SPL3 and SPL9, which are involved in the control of floral transition. In Arabidopsis thaliana (Mouse-ear cress), this protein is RNA demethylase ALKBH10B.